We begin with the raw amino-acid sequence, 300 residues long: 3-methyl-2-oxobutanoate hydroxymethyltransferase (300 aa).

The Mg(2+) site is built by D75 and D118. Residues 75–76 (DS), D118, and K147 contribute to the 3-methyl-2-oxobutanoate site. Residue E149 coordinates Mg(2+). E216 functions as the Proton acceptor in the catalytic mechanism.

This sequence belongs to the PanB family. In terms of assembly, homodecamer; pentamer of dimers. Requires Mg(2+) as cofactor.

It is found in the cytoplasm. The enzyme catalyses 3-methyl-2-oxobutanoate + (6R)-5,10-methylene-5,6,7,8-tetrahydrofolate + H2O = 2-dehydropantoate + (6S)-5,6,7,8-tetrahydrofolate. It functions in the pathway cofactor biosynthesis; (R)-pantothenate biosynthesis; (R)-pantoate from 3-methyl-2-oxobutanoate: step 1/2. Functionally, catalyzes the reversible reaction in which hydroxymethyl group from 5,10-methylenetetrahydrofolate is transferred onto alpha-ketoisovalerate to form ketopantoate. In Verminephrobacter eiseniae (strain EF01-2), this protein is 3-methyl-2-oxobutanoate hydroxymethyltransferase.